The following is a 707-amino-acid chain: Lipase maturation factor 2 (707 aa).

10 helical membrane-spanning segments follow: residues 10 to 30 (LFLQ…YTQI), 78 to 98 (LELL…LSPL), 102 to 122 (VIYL…QVFL), 123 to 143 (YFQW…VAPL), 165 to 185 (DLPF…SGVV), 227 to 247 (LSVV…FAPI), 259 to 279 (VLLQ…LMTL), 310 to 330 (ALLA…LAYG), 364 to 384 (LTLP…LSAL), and 399 to 419 (AVVQ…ISLV). Residues N489 and N616 are each glycosylated (N-linked (GlcNAc...) asparagine). Residues 637 to 657 (ALLWGLLMAVGAVRFVQALLA) form a helical membrane-spanning segment. Residues 665–707 (PLAPVSGEKRRPASQKDSGAASEQATAAPNPCSSSSRTTRRKK) are disordered. The segment covering 679 to 691 (QKDSGAASEQATA) has biased composition (polar residues).

The protein belongs to the lipase maturation factor family.

The protein localises to the endoplasmic reticulum membrane. Its function is as follows. Involved in the maturation of specific proteins in the endoplasmic reticulum. May be required for maturation and transport of active lipoprotein lipase (LPL) through the secretory pathway. The chain is Lipase maturation factor 2 (LMF2) from Homo sapiens (Human).